A 241-amino-acid polypeptide reads, in one-letter code: Caffeoyl-CoA O-methyltransferase (241 aa).

Met1 is subject to Blocked amino end (Met). Lys15 contributes to the substrate binding site. S-adenosyl-L-methionine contacts are provided by residues Thr57, Glu79, 81 to 82 (GV), Ser87, Asp105, and Ala134. Asp157 contacts substrate. An a divalent metal cation-binding site is contributed by Asp157. Asp159 contributes to the S-adenosyl-L-methionine binding site. A divalent metal cation is bound by residues Asp183 and Asn184. Asn188 lines the substrate pocket.

This sequence belongs to the class I-like SAM-binding methyltransferase superfamily. Cation-dependent O-methyltransferase family. CCoAMT subfamily. In terms of assembly, homodimer. It depends on a divalent metal cation as a cofactor. As to expression, roots and leaves.

It catalyses the reaction (E)-caffeoyl-CoA + S-adenosyl-L-methionine = (E)-feruloyl-CoA + S-adenosyl-L-homocysteine + H(+). It functions in the pathway aromatic compound metabolism; phenylpropanoid biosynthesis. Functionally, methylates caffeoyl-CoA to feruloyl-CoA and 5-hydroxyferuloyl-CoA to sinapoyl-CoA. Plays a role in the synthesis of feruloylated polysaccharides. Involved in the reinforcement of the plant cell wall. Also involved in the responding to wounding or pathogen challenge by the increased formation of cell wall-bound ferulic acid polymers. The sequence is that of Caffeoyl-CoA O-methyltransferase from Petroselinum crispum (Parsley).